The chain runs to 391 residues: Origin recognition complex subunit 2 (391 aa).

A disordered region spans residues Met1–Lys43. Over residues Phe22–Ser38 the composition is skewed to polar residues.

The protein belongs to the ORC2 family. ORC is composed of six subunits.

The protein resides in the nucleus. Functionally, component of the origin recognition complex (ORC) that binds origins of replication. DNA-binding is ATP-dependent, however specific DNA sequences that define origins of replication have not been identified so far. ORC is required to assemble the pre-replication complex necessary to initiate DNA replication. The polypeptide is Origin recognition complex subunit 2 (orcB) (Dictyostelium discoideum (Social amoeba)).